We begin with the raw amino-acid sequence, 459 residues long: Trigger factor (459 aa).

The PPIase FKBP-type domain occupies glycine 166 to proline 245.

It belongs to the FKBP-type PPIase family. Tig subfamily.

It localises to the cytoplasm. The catalysed reaction is [protein]-peptidylproline (omega=180) = [protein]-peptidylproline (omega=0). Involved in protein export. Acts as a chaperone by maintaining the newly synthesized protein in an open conformation. Functions as a peptidyl-prolyl cis-trans isomerase. This chain is Trigger factor, found in Bifidobacterium longum subsp. infantis (strain ATCC 15697 / DSM 20088 / JCM 1222 / NCTC 11817 / S12).